An 860-amino-acid chain; its full sequence is Late endosome and vacuole interface protein 11 (860 aa).

The segment at 19 to 45 (EIINNSDHSSSHSTSHEEEDEEEDDTE) is disordered. The segment covering 20-31 (IINNSDHSSSHS) has biased composition (low complexity). Acidic residues predominate over residues 35–45 (EEEDEEEDDTE). Residues 84–138 (KNIAKFWSHFLAIEKKLTKVKCKHCGEILTRSDASLTKTFRSHLKTKHNISANKN) form a BED-type zinc finger. Cysteine 105, cysteine 108, histidine 126, and histidine 131 together coordinate Zn(2+).

The protein belongs to the VID22 family.

The protein localises to the nucleus. Functionally, involved in vacuolar processing and morphology. The sequence is that of Late endosome and vacuole interface protein 11 (ENV11) from Saccharomyces cerevisiae (strain ATCC 204508 / S288c) (Baker's yeast).